We begin with the raw amino-acid sequence, 247 residues long: Probable transcriptional regulatory protein Spro_2779 (247 aa).

It belongs to the TACO1 family.

It localises to the cytoplasm. The chain is Probable transcriptional regulatory protein Spro_2779 from Serratia proteamaculans (strain 568).